Here is a 186-residue protein sequence, read N- to C-terminus: Ribosome-recycling factor (186 aa).

It belongs to the RRF family.

Its subcellular location is the cytoplasm. Responsible for the release of ribosomes from messenger RNA at the termination of protein biosynthesis. May increase the efficiency of translation by recycling ribosomes from one round of translation to another. The chain is Ribosome-recycling factor from Methylibium petroleiphilum (strain ATCC BAA-1232 / LMG 22953 / PM1).